The following is a 943-amino-acid chain: Isoleucine--tRNA ligase 1 (943 aa).

A 'HIGH' region motif is present at residues 58–68 (PYANGTIHIGH). E567 contacts L-isoleucyl-5'-AMP. A 'KMSKS' region motif is present at residues 608–612 (KMSKS). Position 611 (K611) interacts with ATP. C906, C909, C926, and C929 together coordinate Zn(2+).

This sequence belongs to the class-I aminoacyl-tRNA synthetase family. IleS type 1 subfamily. As to quaternary structure, monomer. Zn(2+) is required as a cofactor.

The protein resides in the cytoplasm. It carries out the reaction tRNA(Ile) + L-isoleucine + ATP = L-isoleucyl-tRNA(Ile) + AMP + diphosphate. In terms of biological role, catalyzes the attachment of isoleucine to tRNA(Ile). As IleRS can inadvertently accommodate and process structurally similar amino acids such as valine, to avoid such errors it has two additional distinct tRNA(Ile)-dependent editing activities. One activity is designated as 'pretransfer' editing and involves the hydrolysis of activated Val-AMP. The other activity is designated 'posttransfer' editing and involves deacylation of mischarged Val-tRNA(Ile). Its function is as follows. Confers resistance to the antibiotic mupirocin (pseudomonic acid A), an Ile-analog produced by P.fluorescens NCIMB 10586 itself that competitively inhibits activation by Ile-tRNA synthetase, thus inhibiting protein biosynthesis. This is Isoleucine--tRNA ligase 1 (ileS1) from Pseudomonas fluorescens.